A 324-amino-acid polypeptide reads, in one-letter code: NAC domain-containing protein 30 (324 aa).

Residues 9–158 form the NAC domain; sequence MPPGFRFHPT…GWVVCRAFRK (150 aa). Residues 109-164 mediate DNA binding; it reads IGMRKTLVYYKGRAPNGRKSDWIMHEYRLQNSELAPVQEEGWVVCRAFRKPIPNQR. The segment covering 232–244 has biased composition (low complexity); sequence LPQLDSPSLSPSL. The segment at 232–259 is disordered; that stretch reads LPQLDSPSLSPSLGTNKDQNESFEQEEE.

It belongs to the plant vascular related NAC-domain protein family. As to quaternary structure, forms homodimer and heterodimers with other VND proteins (e.g. NAC037/VND1, NAC076/VND2 and NAC105/VND3) via their N-termini. Interacts with NAC083/VNI2. In terms of tissue distribution, expressed in developing protoxylems in roots and shoots. Detected in root protoxylem poles and in vessels of protoxylems, outermost metaxylems, inner metaxylems, shoots and hypocotyls. Expressed in roots, hypocotyls, cotyledons and leaves. Accumulates in the xylem but not in interfascicular fibers or pith cells in inflorescence stems. Present in developing vessels of the secondary xylem in roots undergoing secondary growth.

The protein resides in the nucleus. Its function is as follows. Transcription activator that binds to the secondary wall NAC binding element (SNBE), 5'-(T/A)NN(C/T)(T/C/G)TNNNNNNNA(A/C)GN(A/C/T)(A/T)-3', in the promoter of target genes (e.g. genes involved in secondary wall biosynthesis, cell wall modification such as xylan accumulation, and programmed cell death). Involved in xylem formation in roots and shoots, especially regulating protoxylem vessel differentiation by promoting immature xylem vessel-specific genes expression. Can activate the expression of several genes including XCP1, MYB46, NAC010/SND3, MYB103, MYB58, MYB63, MYB83, KNAT7, ASL19 and ASL20. Required for the soilborne fungal pathogen Verticillium longisporum-induced transdifferentiation of chloroplast-containing bundle sheath cells to functional xylem elements leading to stunted growth, vein clearing, and leaf chloroses, as well as xylem hyperplasia within the vasculature of leaves, hypocotyls, and roots due to reinitiation of cambial activity and transdifferentiation of xylem parenchyma cells. This developmental reprogramming also mediates an increased drought stress tolerance. The protein is NAC domain-containing protein 30 of Arabidopsis thaliana (Mouse-ear cress).